Here is a 203-residue protein sequence, read N- to C-terminus: Octanoyltransferase (203 aa).

The region spanning 32–203 (ISTPDEIWLV…LMHKIREIFS (172 aa)) is the BPL/LPL catalytic domain. Substrate is bound by residues 71–78 (RGGKITYH), 138–140 (SLG), and 151–153 (GMA). The active-site Acyl-thioester intermediate is the Cys169.

The protein belongs to the LipB family.

The protein resides in the cytoplasm. It catalyses the reaction octanoyl-[ACP] + L-lysyl-[protein] = N(6)-octanoyl-L-lysyl-[protein] + holo-[ACP] + H(+). It functions in the pathway protein modification; protein lipoylation via endogenous pathway; protein N(6)-(lipoyl)lysine from octanoyl-[acyl-carrier-protein]: step 1/2. Its function is as follows. Catalyzes the transfer of endogenously produced octanoic acid from octanoyl-acyl-carrier-protein onto the lipoyl domains of lipoate-dependent enzymes. Lipoyl-ACP can also act as a substrate although octanoyl-ACP is likely to be the physiological substrate. The sequence is that of Octanoyltransferase from Buchnera aphidicola subsp. Baizongia pistaciae (strain Bp).